The primary structure comprises 316 residues: MNIVFMGSPDFAVPGLEKLYNEPGITIKAVVTQPDRKKGRGHKLRPTPVKQMAHKLGLKVLQTDNINREEFITNLRDLSPEAIVVVAFGQKLGKKVLELPSYGCINLHASLLPRYRGASPIHRAIINGDKVTGVTTMYMDEGWDTGDIIYKKEVKINREDTAGTLHDKLASIGGDLLVKTLNDIEKGVAPREKQSEDKASYAYKIDRKIGELDWSRSSEDIFNLVRGVNPWPGAYTTWKGKLLKIWWVEPLKLTVTENDKKMEAGEVITASQEDGIIVKTGDDAVKIIELQLAGRKKITADKFVLGYNIKEGDKLG.

Residue 110–113 (SLLP) coordinates (6S)-5,6,7,8-tetrahydrofolate.

Belongs to the Fmt family.

It catalyses the reaction L-methionyl-tRNA(fMet) + (6R)-10-formyltetrahydrofolate = N-formyl-L-methionyl-tRNA(fMet) + (6S)-5,6,7,8-tetrahydrofolate + H(+). Attaches a formyl group to the free amino group of methionyl-tRNA(fMet). The formyl group appears to play a dual role in the initiator identity of N-formylmethionyl-tRNA by promoting its recognition by IF2 and preventing the misappropriation of this tRNA by the elongation apparatus. This Halothermothrix orenii (strain H 168 / OCM 544 / DSM 9562) protein is Methionyl-tRNA formyltransferase.